The following is a 154-amino-acid chain: Myoglobin (154 aa).

The region spanning 2–148 (GLSDGEWQLV…FRNEMAAQYK (147 aa)) is the Globin domain. At Ser-4 the chain carries Phosphoserine. Residue His-65 coordinates nitrite. His-65 serves as a coordination point for O2. Thr-68 bears the Phosphothreonine mark. His-94 is a binding site for heme b.

As to quaternary structure, monomeric.

It localises to the cytoplasm. The protein localises to the sarcoplasm. The catalysed reaction is Fe(III)-heme b-[protein] + nitric oxide + H2O = Fe(II)-heme b-[protein] + nitrite + 2 H(+). The enzyme catalyses H2O2 + AH2 = A + 2 H2O. Functionally, monomeric heme protein which primary function is to store oxygen and facilitate its diffusion within muscle tissues. Reversibly binds oxygen through a pentacoordinated heme iron and enables its timely and efficient release as needed during periods of heightened demand. Depending on the oxidative conditions of tissues and cells, and in addition to its ability to bind oxygen, it also has a nitrite reductase activity whereby it regulates the production of bioactive nitric oxide. Under stress conditions, like hypoxia and anoxia, it also protects cells against reactive oxygen species thanks to its pseudoperoxidase activity. This Bubalus bubalis (Domestic water buffalo) protein is Myoglobin.